A 590-amino-acid chain; its full sequence is UvrABC system protein C (590 aa).

The region spanning 14 to 91 (DQPGCYLMKD…IKKYDPKYNV (78 aa)) is the GIY-YIG domain. Residues 196-231 (NEIKKELEAKMAEAAEKLEFERAKEFRDQLAHIEST) enclose the UVR domain.

The protein belongs to the UvrC family. Interacts with UvrB in an incision complex.

Its subcellular location is the cytoplasm. Functionally, the UvrABC repair system catalyzes the recognition and processing of DNA lesions. UvrC both incises the 5' and 3' sides of the lesion. The N-terminal half is responsible for the 3' incision and the C-terminal half is responsible for the 5' incision. This is UvrABC system protein C from Bacillus velezensis (strain DSM 23117 / BGSC 10A6 / LMG 26770 / FZB42) (Bacillus amyloliquefaciens subsp. plantarum).